The chain runs to 425 residues: CinA-like protein (425 aa).

Belongs to the CinA family.

The polypeptide is CinA-like protein (Mycobacterium marinum (strain ATCC BAA-535 / M)).